We begin with the raw amino-acid sequence, 609 residues long: Aspartate--tRNA(Asp/Asn) ligase (609 aa).

L-aspartate is bound at residue glutamate 177. The tract at residues 201 to 204 (QLFK) is aspartate. Arginine 223 serves as a coordination point for L-aspartate. Residues 223–225 (RDE) and glutamine 232 each bind ATP. Histidine 461 is a binding site for L-aspartate. Glutamate 499 is an ATP binding site. Arginine 506 lines the L-aspartate pocket. An ATP-binding site is contributed by 551-554 (GVDR).

It belongs to the class-II aminoacyl-tRNA synthetase family. Type 1 subfamily. As to quaternary structure, homodimer.

The protein resides in the cytoplasm. It carries out the reaction tRNA(Asx) + L-aspartate + ATP = L-aspartyl-tRNA(Asx) + AMP + diphosphate. Aspartyl-tRNA synthetase with relaxed tRNA specificity since it is able to aspartylate not only its cognate tRNA(Asp) but also tRNA(Asn). Reaction proceeds in two steps: L-aspartate is first activated by ATP to form Asp-AMP and then transferred to the acceptor end of tRNA(Asp/Asn). This chain is Aspartate--tRNA(Asp/Asn) ligase, found in Synechococcus sp. (strain CC9605).